The chain runs to 673 residues: Annexin A6 (673 aa).

The residue at position 2 (alanine 2) is an N-acetylalanine. Serine 13 carries the phosphoserine modification. Annexin repeat units follow at residues 20–91, 92–163, 175–247, 251–322, 363–434, 435–506, 521–595, and 599–670; these read FDPN…GLMR, PPAY…VLLQ, DLVQ…AVVK, STPE…KLSG, FNPD…GLMM, PPAH…SLAT, EDAQ…AIVQ, and NKPL…ALCG. The residue at position 30 (tyrosine 30) is a Phosphotyrosine. 4 positions are modified to N6-acetyllysine: lysine 63, lysine 68, lysine 75, and lysine 81. Tyrosine 201 carries the phosphotyrosine modification. Residues lysine 306, lysine 370, and lysine 418 each carry the N6-acetyllysine modification. Serine 422 bears the Phosphoserine mark. At lysine 483 the chain carries N6-acetyllysine. Serine 537 bears the Phosphoserine mark. An N6-acetyllysine modification is found at lysine 620.

Belongs to the annexin family. In terms of processing, phosphorylated in response to growth factor stimulation.

The protein localises to the cytoplasm. It is found in the melanosome. Functionally, may associate with CD21. May regulate the release of Ca(2+) from intracellular stores. This is Annexin A6 (ANXA6) from Homo sapiens (Human).